Consider the following 350-residue polypeptide: Phosphate acyltransferase (350 aa).

It belongs to the PlsX family. As to quaternary structure, homodimer. Probably interacts with PlsY.

The protein localises to the cytoplasm. The enzyme catalyses a fatty acyl-[ACP] + phosphate = an acyl phosphate + holo-[ACP]. The protein operates within lipid metabolism; phospholipid metabolism. Catalyzes the reversible formation of acyl-phosphate (acyl-PO(4)) from acyl-[acyl-carrier-protein] (acyl-ACP). This enzyme utilizes acyl-ACP as fatty acyl donor, but not acyl-CoA. In Chelativorans sp. (strain BNC1), this protein is Phosphate acyltransferase.